A 141-amino-acid polypeptide reads, in one-letter code: Hemoglobin subunit alpha-A (141 aa).

A Globin domain is found at 1-141; the sequence is VLTEEDKSRV…VAKTLVSRYR (141 aa). His58 contacts O2. His87 is a heme b binding site.

This sequence belongs to the globin family. As to quaternary structure, heterotetramer of two alpha chains and two beta chains. As to expression, red blood cells.

In terms of biological role, involved in oxygen transport from the lung to the various peripheral tissues. The protein is Hemoglobin subunit alpha-A of Drymarchon melanurus erebennus (Texas indigo snake).